A 475-amino-acid chain; its full sequence is PRAME family member 20 (475 aa).

An LRR 1; degenerate repeat occupies 97-124 (RWKLQVLDLQDVSENFWMVWSEAMARRC). The LRR 2; degenerate repeat unit spans residues 179 to 203 (HLCCKKLKMLGMLFHNIRNILKTVN). One copy of the LRR 3; degenerate repeat lies at 204–230 (LDCIQEVEVNCNWTLPVLAEFTPYLGQ). One copy of the LRR 4; degenerate repeat lies at 231–265 (MRNLRKLVLSDIDSRYISPEQKKEFVTQFTTQFLK). LRR repeat units follow at residues 266 to 291 (LRCL…LSCL), 292 to 323 (KTSL…GQLK), 324 to 342 (TLDL…PLQV), 348 to 375 (AATL…ALSR), and 376 to 400 (CFEL…LLCH).

This sequence belongs to the PRAME family.

The protein is PRAME family member 20 of Homo sapiens (Human).